Consider the following 261-residue polypeptide: MEMO1 family protein AF_2310 (261 aa).

It belongs to the MEMO1 family.

The polypeptide is MEMO1 family protein AF_2310 (Archaeoglobus fulgidus (strain ATCC 49558 / DSM 4304 / JCM 9628 / NBRC 100126 / VC-16)).